The sequence spans 406 residues: Succinyl-diaminopimelate desuccinylase (406 aa).

His-95 serves as a coordination point for Zn(2+). Asp-97 is an active-site residue. Residue Asp-128 coordinates Zn(2+). Residue Glu-162 is the Proton acceptor of the active site. Glu-163, Glu-191, and His-377 together coordinate Zn(2+).

It belongs to the peptidase M20A family. DapE subfamily. As to quaternary structure, homodimer. The cofactor is Zn(2+). Co(2+) is required as a cofactor.

It catalyses the reaction N-succinyl-(2S,6S)-2,6-diaminopimelate + H2O = (2S,6S)-2,6-diaminopimelate + succinate. The protein operates within amino-acid biosynthesis; L-lysine biosynthesis via DAP pathway; LL-2,6-diaminopimelate from (S)-tetrahydrodipicolinate (succinylase route): step 3/3. Catalyzes the hydrolysis of N-succinyl-L,L-diaminopimelic acid (SDAP), forming succinate and LL-2,6-diaminopimelate (DAP), an intermediate involved in the bacterial biosynthesis of lysine and meso-diaminopimelic acid, an essential component of bacterial cell walls. This is Succinyl-diaminopimelate desuccinylase from Polaromonas naphthalenivorans (strain CJ2).